The primary structure comprises 537 residues: [Pyruvate dehydrogenase [acetyl-transferring]]-phosphatase 1, mitochondrial (537 aa).

A mitochondrion-targeting transit peptide spans 1–71 (MPAPTQLFFP…WWHYTQGRRY (71 aa)). The 417-residue stretch at 109–525 (ILGFDSNQLP…DDITIIVVQF (417 aa)) folds into the PPM-type phosphatase domain. Positions 144 and 145 each coordinate Mn(2+). An N6-acetyllysine modification is found at Lys202. Mn(2+) is bound by residues Asp418 and Asp516.

This sequence belongs to the PP2C family. As to quaternary structure, heterodimer of a catalytic (PDP1) and a regulatory (PDPR) subunit. Mn(2+) is required as a cofactor. It depends on Mg(2+) as a cofactor.

It is found in the mitochondrion. The enzyme catalyses O-phospho-L-seryl-[pyruvate dehydrogenase E1 alpha subunit] + H2O = L-seryl-[pyruvate dehydrogenase E1 alpha subunit] + phosphate. Its activity is regulated as follows. Magnesium-dependent and calcium-stimulated. PDP1 activity strongly depends on its Ca(2+)-dependent binding to the lipoyl domain of E2 subunit of component of the pyruvate dehydrogenase complex. Functionally, mitochondrial enzyme that catalyzes the dephosphorylation and concomitant reactivation of the alpha subunit of the E1 component of the pyruvate dehydrogenase complex (PDC), thereby stimulating the conversion of pyruvate into acetyl-CoA. The polypeptide is [Pyruvate dehydrogenase [acetyl-transferring]]-phosphatase 1, mitochondrial (PDP1) (Pongo abelii (Sumatran orangutan)).